The primary structure comprises 107 residues: uncharacterized protein (107 aa).

The chain crosses the membrane as a helical span at residues 13-33 (VLIVTFLSSFIFIVWLPVALV).

It localises to the membrane. This is an uncharacterized protein from Saccharomyces cerevisiae (strain ATCC 204508 / S288c) (Baker's yeast).